The sequence spans 197 residues: Guanylate kinase (197 aa).

Residues 7–185 form the Guanylate kinase-like domain; the sequence is GLIIILSSPS…TLKKIHEIIV (179 aa). 14 to 21 is a binding site for ATP; that stretch reads SPSGTGKS.

The protein belongs to the guanylate kinase family.

It localises to the cytoplasm. The catalysed reaction is GMP + ATP = GDP + ADP. Its function is as follows. Essential for recycling GMP and indirectly, cGMP. The protein is Guanylate kinase (gmk) of Rickettsia prowazekii (strain Madrid E).